Consider the following 504-residue polypeptide: Glycerol kinase (504 aa).

Threonine 14 is a binding site for ADP. The ATP site is built by threonine 14, threonine 15, and serine 16. Threonine 14 provides a ligand contact to sn-glycerol 3-phosphate. An ADP-binding site is contributed by arginine 18. 4 residues coordinate sn-glycerol 3-phosphate: arginine 84, glutamate 85, tyrosine 136, and aspartate 246. Arginine 84, glutamate 85, tyrosine 136, aspartate 246, and glutamine 247 together coordinate glycerol. The ADP site is built by threonine 268 and glycine 311. ATP-binding residues include threonine 268, glycine 311, glutamine 315, and glycine 412. Residues glycine 412 and asparagine 416 each contribute to the ADP site.

The protein belongs to the FGGY kinase family.

The enzyme catalyses glycerol + ATP = sn-glycerol 3-phosphate + ADP + H(+). The protein operates within polyol metabolism; glycerol degradation via glycerol kinase pathway; sn-glycerol 3-phosphate from glycerol: step 1/1. With respect to regulation, inhibited by fructose 1,6-bisphosphate (FBP). Functionally, key enzyme in the regulation of glycerol uptake and metabolism. Catalyzes the phosphorylation of glycerol to yield sn-glycerol 3-phosphate. The polypeptide is Glycerol kinase (Aliivibrio fischeri (strain MJ11) (Vibrio fischeri)).